Here is a 463-residue protein sequence, read N- to C-terminus: Chromosomal replication initiator protein DnaA (463 aa).

The domain I, interacts with DnaA modulators stretch occupies residues 1 to 83 (MSTNQIILTD…LQLFQHYNNT (83 aa)). Positions 83–124 (TIKSIEIITKELPGTTQTVTELPTKTFADIGSSELNSENIFS) are domain II. Residues 125–343 (TLDARFTFDN…GALNKVIAHS (219 aa)) form a domain III, AAA+ region region. The ATP site is built by G171, G173, K174, and T175. Residues 344–463 (NFTLKEITLE…INLLMKILQN (120 aa)) are domain IV, binds dsDNA.

The protein belongs to the DnaA family. As to quaternary structure, oligomerizes as a right-handed, spiral filament on DNA at oriC.

The protein resides in the cytoplasm. Functionally, plays an essential role in the initiation and regulation of chromosomal replication. ATP-DnaA binds to the origin of replication (oriC) to initiate formation of the DNA replication initiation complex once per cell cycle. Binds the DnaA box (a 9 base pair repeat at the origin) and separates the double-stranded (ds)DNA. Forms a right-handed helical filament on oriC DNA; dsDNA binds to the exterior of the filament while single-stranded (ss)DNA is stabiized in the filament's interior. The ATP-DnaA-oriC complex binds and stabilizes one strand of the AT-rich DNA unwinding element (DUE), permitting loading of DNA polymerase. After initiation quickly degrades to an ADP-DnaA complex that is not apt for DNA replication. Binds acidic phospholipids. The chain is Chromosomal replication initiator protein DnaA from Rickettsia peacockii (strain Rustic).